A 65-amino-acid chain; its full sequence is Large ribosomal subunit protein uL29 (65 aa).

It belongs to the universal ribosomal protein uL29 family.

The sequence is that of Large ribosomal subunit protein uL29 from Paracidovorax citrulli (strain AAC00-1) (Acidovorax citrulli).